We begin with the raw amino-acid sequence, 128 residues long: NADH dehydrogenase [ubiquinone] 1 beta subcomplex subunit 6 (128 aa).

Residue T2 is modified to N-acetylthreonine. K24 carries the post-translational modification N6-acetyllysine. Residues 68–86 (SIFVFTHILVPAWIIHYYM) traverse the membrane as a helical segment.

This sequence belongs to the complex I NDUFB6 subunit family. Complex I is composed of 45 different subunits.

It localises to the mitochondrion inner membrane. Its function is as follows. Accessory subunit of the mitochondrial membrane respiratory chain NADH dehydrogenase (Complex I), that is believed not to be involved in catalysis. Complex I functions in the transfer of electrons from NADH to the respiratory chain. The immediate electron acceptor for the enzyme is believed to be ubiquinone. The chain is NADH dehydrogenase [ubiquinone] 1 beta subcomplex subunit 6 (NDUFB6) from Pongo abelii (Sumatran orangutan).